We begin with the raw amino-acid sequence, 72 residues long: Phaiodotoxin-2 (72 aa).

Positions 1 to 72 constitute an LCN-type CS-alpha/beta domain; sequence KFIRHKDESF…CFGALESKCA (72 aa). 4 disulfides stabilise this stretch: C13/C38, C23/C50, C27/C52, and C63/C71.

This sequence belongs to the long (4 C-C) scorpion toxin superfamily. Sodium channel inhibitor family. In terms of tissue distribution, expressed by the venom gland.

It localises to the secreted. In terms of biological role, sodium channel (Nav) specific neurotoxin. The protein is Phaiodotoxin-2 of Anuroctonus phaiodactylus (Mafia scorpion).